The primary structure comprises 294 residues: Acetyl-coenzyme A carboxylase carboxyl transferase subunit beta (294 aa).

Residues 25-294 (VWTKCTACEQ…PFLEPEIIAD (270 aa)) form the CoA carboxyltransferase N-terminal domain. Cysteine 29, cysteine 32, cysteine 48, and cysteine 51 together coordinate Zn(2+). The C4-type zinc finger occupies 29–51 (CTACEQVLYRDELKRHLEVCPKC).

This sequence belongs to the AccD/PCCB family. Acetyl-CoA carboxylase is a heterohexamer composed of biotin carboxyl carrier protein (AccB), biotin carboxylase (AccC) and two subunits each of ACCase subunit alpha (AccA) and ACCase subunit beta (AccD). Requires Zn(2+) as cofactor.

The protein resides in the cytoplasm. It catalyses the reaction N(6)-carboxybiotinyl-L-lysyl-[protein] + acetyl-CoA = N(6)-biotinyl-L-lysyl-[protein] + malonyl-CoA. It functions in the pathway lipid metabolism; malonyl-CoA biosynthesis; malonyl-CoA from acetyl-CoA: step 1/1. Its function is as follows. Component of the acetyl coenzyme A carboxylase (ACC) complex. Biotin carboxylase (BC) catalyzes the carboxylation of biotin on its carrier protein (BCCP) and then the CO(2) group is transferred by the transcarboxylase to acetyl-CoA to form malonyl-CoA. The polypeptide is Acetyl-coenzyme A carboxylase carboxyl transferase subunit beta (Actinobacillus succinogenes (strain ATCC 55618 / DSM 22257 / CCUG 43843 / 130Z)).